Reading from the N-terminus, the 222-residue chain is UPF0758 protein CT0611 (222 aa).

An MPN domain is found at 100–222 (KVKGARDVFE…WFSFRDHALL (123 aa)). Zn(2+) is bound by residues His-171, His-173, and Asp-184. The JAMM motif motif lies at 171-184 (HNHPSGDVQPSNAD).

The protein belongs to the UPF0758 family.

The sequence is that of UPF0758 protein CT0611 from Chlorobaculum tepidum (strain ATCC 49652 / DSM 12025 / NBRC 103806 / TLS) (Chlorobium tepidum).